Consider the following 284-residue polypeptide: 2-dehydro-3-deoxyphosphooctonate aldolase (284 aa).

It belongs to the KdsA family.

The protein resides in the cytoplasm. It catalyses the reaction D-arabinose 5-phosphate + phosphoenolpyruvate + H2O = 3-deoxy-alpha-D-manno-2-octulosonate-8-phosphate + phosphate. It participates in carbohydrate biosynthesis; 3-deoxy-D-manno-octulosonate biosynthesis; 3-deoxy-D-manno-octulosonate from D-ribulose 5-phosphate: step 2/3. It functions in the pathway bacterial outer membrane biogenesis; lipopolysaccharide biosynthesis. The polypeptide is 2-dehydro-3-deoxyphosphooctonate aldolase (Pectobacterium atrosepticum (strain SCRI 1043 / ATCC BAA-672) (Erwinia carotovora subsp. atroseptica)).